Reading from the N-terminus, the 134-residue chain is Homeobox protein ceh-5 (134 aa).

A DNA-binding region (homeobox) is located at residues 35-94 (PKRPRTVFTDEQLEKLEESFNTSGYLSGSTRAKLAESLGLSDNQVKVWFQNRRTKQKKID).

Its subcellular location is the nucleus. This chain is Homeobox protein ceh-5 (ceh-5), found in Caenorhabditis elegans.